A 470-amino-acid chain; its full sequence is Asparagine--tRNA ligase (470 aa).

The protein belongs to the class-II aminoacyl-tRNA synthetase family. As to quaternary structure, homodimer.

It is found in the cytoplasm. It carries out the reaction tRNA(Asn) + L-asparagine + ATP = L-asparaginyl-tRNA(Asn) + AMP + diphosphate + H(+). The polypeptide is Asparagine--tRNA ligase (Blochmanniella floridana).